Here is a 993-residue protein sequence, read N- to C-terminus: MGSGRVPGLCLLVLLVHARAAQYSKAAQDVDECVEGTDNCHIDAICQNTPRSYKCICKSGYTGDGKHCKDVDECEREDNAGCVHDCVNIPGNYRCTCYDGFHLAHDGHNCLDVDECAEGNGGCQQSCVNMMGSYECHCREGFFLSDNQHTCIQRPEEGMNCMNKNHGCAHICRETPKGGIACECRPGFELTKNQRDCKLTCNYGNGGCQHTCDDTEQGPRCGCHIKFVLHTDGKTCIETCAVNNGGCDSKCHDAATGVHCTCPVGFMLQPDRKTCKDIDECRLNNGGCDHICRNTVGSFECSCKKGYKLLINERNCQDIDECSFDRTCDHICVNTPGSFQCLCHRGYLLYGITHCGDVDECSINRGGCRFGCINTPGSYQCTCPAGQGRLHWNGKDCTEPLKCQGSPGASKAMLSCNRSGKKDTCALTCPSRARFLPESENGFTVSCGTPSPRAAPARAGHNGNSTNSNHCHEAAVLSIKQRASFKIKDAKCRLHLRNKGKTEEAGRITGPGGAPCSECQVTFIHLKCDSSRKGKGRRARTPPGKEVTRLTLELEAEVRAEETTASCGLPCLRQRMERRLKGSLKMLRKSINQDRFLLRLAGLDYELAHKPGLVAGERAEPMESCRPGQHRAGTKCVSCPQGTYYHGQTEQCVPCPAGTFQEREGQLSCDLCPGSDAHGPLGATNVTTCAGQCPPGQHSVDGFKPCQPCPRGTYQPEAGRTLCFPCGGGLTTKHEGAISFQDCDTKVQCSPGHYYNTSIHRCIRCAMGSYQPDFRQNFCSRCPGNTSTDFDGSTSVAQCKNRQCGGELGEFTGYIESPNYPGNYPAGVECIWNINPPPKRKILIVVPEIFLPSEDECGDVLVMRKNSSPSSITTYETCQTYERPIAFTARSRKLWINFKTSEANSARGFQIPYVTYDEDYEQLVEDIVRDGRLYASENHQEILKDKKLIKAFFEVLAHPQNYFKYTEKHKEMLPKSFIKLLRSKVSSFLRPYK.

Residues 1–20 form the signal peptide; the sequence is MGSGRVPGLCLLVLLVHARA. The 41-residue stretch at 29-69 folds into the EGF-like 1; calcium-binding domain; the sequence is DVDECVEGTDNCHIDAICQNTPRSYKCICKSGYTGDGKHCK. 26 cysteine pairs are disulfide-bonded: cysteine 33–cysteine 46, cysteine 40–cysteine 55, cysteine 57–cysteine 68, cysteine 74–cysteine 86, cysteine 82–cysteine 95, cysteine 97–cysteine 110, cysteine 116–cysteine 127, cysteine 123–cysteine 136, cysteine 161–cysteine 172, cysteine 168–cysteine 182, cysteine 184–cysteine 197, cysteine 201–cysteine 212, cysteine 208–cysteine 221, cysteine 223–cysteine 236, cysteine 240–cysteine 251, cysteine 247–cysteine 260, cysteine 262–cysteine 275, cysteine 281–cysteine 292, cysteine 288–cysteine 301, cysteine 303–cysteine 316, cysteine 322–cysteine 332, cysteine 328–cysteine 341, cysteine 343–cysteine 355, cysteine 361–cysteine 372, cysteine 368–cysteine 381, and cysteine 383–cysteine 397. An EGF-like 2; calcium-binding domain is found at 70–111; it reads DVDECEREDNAGCVHDCVNIPGNYRCTCYDGFHLAHDGHNCL. The 37-residue stretch at 112–148 folds into the EGF-like 3; calcium-binding domain; that stretch reads DVDECAEGNGGCQQSCVNMMGSYECHCREGFFLSDNQ. 3 EGF-like domains span residues 157-198, 199-237, and 238-276; these read EGMN…RDCK, LTCNYGNGGCQHTCDDTEQGPRCGCHIKFVLHTDGKTCI, and ETCAVNNGGCDSKCHDAATGVHCTCPVGFMLQPDRKTCK. The region spanning 277-317 is the EGF-like 7; calcium-binding domain; it reads DIDECRLNNGGCDHICRNTVGSFECSCKKGYKLLINERNCQ. The EGF-like 8; calcium-binding domain occupies 318 to 356; the sequence is DIDECSFDRTCDHICVNTPGSFQCLCHRGYLLYGITHCG. The EGF-like 9; calcium-binding domain occupies 357–398; sequence DVDECSINRGGCRFGCINTPGSYQCTCPAGQGRLHWNGKDCT. N-linked (GlcNAc...) asparagine glycans are attached at residues asparagine 417, asparagine 464, asparagine 685, asparagine 756, and asparagine 785. 2 disulfides stabilise this stretch: cysteine 804–cysteine 830 and cysteine 857–cysteine 878. Positions 804–916 constitute a CUB domain; it reads CGGELGEFTG…RGFQIPYVTY (113 aa).

In terms of assembly, forms homooligomers. Forms heterooligomers with SCUBE1 and SCUBE2. Interacts with TGFBR2 through the CUB domain; this interaction does not affect TGFB1-binding to TGFBR2. Interacts with BMP2, BMP4 and BMP7; the interaction is mediated by the CUB domain. Interacts with BMPR1A, BMPR1B and BMPR2; the interaction with BMPR1A and BMPR1B is BMP2- and BMP4-dependent. Post-translationally, N-glycosylated. In terms of processing, proteolytic cleavage produces a CUB-containing C-terminal fragment that retains the ability to bind to TGFBR2. This reaction is catalyzed in vitro by MMP2 and, to a lesser extent, by MMP9. In terms of tissue distribution, highly expressed in osteoblasts. In normal lung, mainly expressed in bronchial epithelial cells. Tends to be up-regulated in lung cancer cells.

Its subcellular location is the secreted. The protein resides in the cell surface. In terms of biological role, is a positive regulator of the BMP signaling pathway, required for proper chondrogenesis, osteogenesis and skeletal development. It acts as a coreceptor for BMP ligands, particularly BMP2 and BMP4, facilitating their interactions with BMP type I receptors. It is required for ligand-induced recruitment of BMP receptors to lipid rafts. Binds to TGFBR2 and activates TGFB signaling. In lung cancer cells, could serve as an endogenous autocrine and paracrine ligand of TGFBR2, which could regulate TGFBR2 signaling and hence modulate epithelial-mesenchymal transition and cancer progression. In Homo sapiens (Human), this protein is Signal peptide, CUB and EGF-like domain-containing protein 3.